The primary structure comprises 262 residues: L-aspartate dehydrogenase (262 aa).

Ala-128 and Asn-183 together coordinate NAD(+). Residue His-213 is part of the active site.

This sequence belongs to the L-aspartate dehydrogenase family.

It catalyses the reaction L-aspartate + NADP(+) + H2O = oxaloacetate + NH4(+) + NADPH + H(+). The catalysed reaction is L-aspartate + NAD(+) + H2O = oxaloacetate + NH4(+) + NADH + H(+). It functions in the pathway cofactor biosynthesis; NAD(+) biosynthesis; iminoaspartate from L-aspartate (dehydrogenase route): step 1/1. Functionally, specifically catalyzes the NAD or NADP-dependent dehydrogenation of L-aspartate to iminoaspartate. The chain is L-aspartate dehydrogenase from Methanopyrus kandleri (strain AV19 / DSM 6324 / JCM 9639 / NBRC 100938).